The following is a 169-amino-acid chain: uncharacterized protein (169 aa).

Position 165 is a phosphoserine (serine 165).

This is an uncharacterized protein from Drosophila melanogaster (Fruit fly).